The sequence spans 1168 residues: Transcription-repair-coupling factor (1168 aa).

The 162-residue stretch at 633–794 folds into the Helicase ATP-binding domain; sequence DMQKSRPMDR…MLGVRDLSVI (162 aa). 646-653 provides a ligand contact to ATP; sequence GDVGYGKT. Residues 747–750 carry the DEEQ box motif; the sequence is DEEQ. One can recognise a Helicase C-terminal domain in the interval 808 to 969; that stretch reads VLEQNMSFIK…GFKIAMRDLN (162 aa).

This sequence in the N-terminal section; belongs to the UvrB family. The protein in the C-terminal section; belongs to the helicase family. RecG subfamily.

The protein localises to the cytoplasm. Its function is as follows. Couples transcription and DNA repair by recognizing RNA polymerase (RNAP) stalled at DNA lesions. Mediates ATP-dependent release of RNAP and its truncated transcript from the DNA, and recruitment of nucleotide excision repair machinery to the damaged site. The polypeptide is Transcription-repair-coupling factor (Staphylococcus aureus (strain bovine RF122 / ET3-1)).